Consider the following 336-residue polypeptide: Glycerol-3-phosphate dehydrogenase [NAD(P)+] (336 aa).

Residues serine 11, tryptophan 12, arginine 32, arginine 33, and lysine 110 each contribute to the NADPH site. Sn-glycerol 3-phosphate contacts are provided by lysine 110 and glycine 140. Alanine 144 lines the NADPH pocket. Sn-glycerol 3-phosphate is bound by residues lysine 195, aspartate 248, serine 258, arginine 259, and asparagine 260. Lysine 195 serves as the catalytic Proton acceptor. Arginine 259 lines the NADPH pocket. 2 residues coordinate NADPH: valine 284 and glutamate 286.

The protein belongs to the NAD-dependent glycerol-3-phosphate dehydrogenase family.

Its subcellular location is the cytoplasm. It catalyses the reaction sn-glycerol 3-phosphate + NAD(+) = dihydroxyacetone phosphate + NADH + H(+). The catalysed reaction is sn-glycerol 3-phosphate + NADP(+) = dihydroxyacetone phosphate + NADPH + H(+). It functions in the pathway membrane lipid metabolism; glycerophospholipid metabolism. Functionally, catalyzes the reduction of the glycolytic intermediate dihydroxyacetone phosphate (DHAP) to sn-glycerol 3-phosphate (G3P), the key precursor for phospholipid synthesis. This chain is Glycerol-3-phosphate dehydrogenase [NAD(P)+], found in Nocardia farcinica (strain IFM 10152).